Reading from the N-terminus, the 316-residue chain is Glutathione synthetase (316 aa).

An ATP-grasp domain is found at 123–309 (NEKISTLSFK…ISGILLDSIE (187 aa)). An ATP-binding site is contributed by 149-206 (FQEKFGDIILKPINKMGGDSVFYVKKNDPNVSVIIDQLTNYGNSFCLIQEYIKEILNG). Mg(2+) is bound by residues glutamate 280 and asparagine 282.

It belongs to the prokaryotic GSH synthase family. It depends on Mg(2+) as a cofactor. Requires Mn(2+) as cofactor.

The enzyme catalyses gamma-L-glutamyl-L-cysteine + glycine + ATP = glutathione + ADP + phosphate + H(+). It functions in the pathway sulfur metabolism; glutathione biosynthesis; glutathione from L-cysteine and L-glutamate: step 2/2. The polypeptide is Glutathione synthetase (Wigglesworthia glossinidia brevipalpis).